We begin with the raw amino-acid sequence, 119 residues long: FAD-linked sulfhydryl oxidase (119 aa).

In terms of domain architecture, ERV/ALR sulfhydryl oxidase spans 1 to 97 (MLHWGPKFWR…ISWSEYKNIY (97 aa)). A disulfide bond links cysteine 44 and cysteine 47.

It belongs to the asfivirus B119L family. In terms of assembly, interacts with A151R. FAD serves as cofactor.

The protein resides in the host cytoplasm. The protein localises to the virion. The enzyme catalyses 2 R'C(R)SH + O2 = R'C(R)S-S(R)CR' + H2O2. In terms of biological role, FAD-dependent sulfhydryl oxidase that catalyzes the formation of disulfide bonds in viral proteins produced in the cell cytoplasm. Involved in virion maturation. The chain is FAD-linked sulfhydryl oxidase from Ornithodoros (relapsing fever ticks).